A 379-amino-acid polypeptide reads, in one-letter code: Lactosylceramide 1,3-N-acetyl-beta-D-glucosaminyltransferase A (379 aa).

Over 1–12 (MFMNCRRVKKWH) the chain is Cytoplasmic. Residues 13–30 (FLQLLSMCCVMSVLMVCW) form a helical; Signal-anchor for type II membrane protein membrane-spanning segment. Over 31–379 (EHVDHHVVSH…NTYSCMAAFT (349 aa)) the chain is Lumenal. N-linked (GlcNAc...) asparagine glycans are attached at residues Asn-57, Asn-113, Asn-168, and Asn-277.

Belongs to the glycosyltransferase 31 family.

It is found in the golgi apparatus membrane. It carries out the reaction a beta-D-Gal-(1-&gt;4)-beta-D-Glc-(1&lt;-&gt;1)-Cer(d18:1(4E)) + UDP-N-acetyl-alpha-D-glucosamine = a beta-D-GlcNAc-(1-&gt;3)-beta-D-Gal-(1-&gt;4)-beta-D-Glc-(1&lt;-&gt;1)-Cer(d18:1(4E)) + UDP + H(+). The catalysed reaction is a neolactoside nLc4Cer(d18:1(4E)) + UDP-N-acetyl-alpha-D-glucosamine = a neolactoside IV(3)-beta-GlcNAc-nLc4Cer(d18:1(4E)) + UDP + H(+). It functions in the pathway protein modification; protein glycosylation. Beta-1,3-N-acetylglucosaminyltransferase that plays a key role in the synthesis of lacto- or neolacto-series carbohydrate chains on glycolipids. The chain is Lactosylceramide 1,3-N-acetyl-beta-D-glucosaminyltransferase A (b3gnt5a) from Danio rerio (Zebrafish).